The primary structure comprises 620 residues: MPIRALADIIINQIAAGEVIERPASVVKELVENALDAGAKRIEVATAGGGLNLIRVIDDGGGIPPEELPLAVARHCTSKLTSDIHDIRTLGFRGEALPSIGSVGRLTLRSRTPDADGGAEITVDGGKASAVKPVAANRGTTVEVRDLFFATPARLKFMKSERAEAAAITEVVKRIALAFPAVRFMLSGTDRTSTELPAVSADGDGLLRRLGQIIGKDFAENALPIDAEREGVFLTGYASIPSFTRGNALAQFAYVNGRPVRDKLIAGAIRGAYMDALPRDRHAVTALFISLDPALVDVNVHPAKADVRFRDPGLVRGLIVGAIRQALEGAGVRAATTGAAAMLQAFRVPEGPSRANGANDFTGRPFSGTERPRGGWSMELSPSRPLEDAFPPAANGFAEAQQVVFDIGSVVSADARAGTLEALSDLVGRPLGAARAQVHENYIVAQTEDSLVIVDQHAAHERLVYEALKDAIHSKPLPSQMLLMPEIVDLPEEDAERLCAHAEFLARLGFGVERFGPGAICVRETPSMLGEVDIAALIRDLADEIADNDTANSLKKRIDHIAATMACHGSIRSGRRLKPEEMNALLRQMEATPGSGTCNHGRPTYIELKLADIERLFGRR.

Positions 353–375 (SRANGANDFTGRPFSGTERPRGG) are disordered.

This sequence belongs to the DNA mismatch repair MutL/HexB family.

Its function is as follows. This protein is involved in the repair of mismatches in DNA. It is required for dam-dependent methyl-directed DNA mismatch repair. May act as a 'molecular matchmaker', a protein that promotes the formation of a stable complex between two or more DNA-binding proteins in an ATP-dependent manner without itself being part of a final effector complex. This Chelativorans sp. (strain BNC1) protein is DNA mismatch repair protein MutL.